We begin with the raw amino-acid sequence, 233 residues long: Phosphoribosylformylglycinamidine synthase subunit PurQ (233 aa).

The Glutamine amidotransferase type-1 domain maps to 9–233 (RIGIVTFPGS…LSGFLSAFSS (225 aa)). The active-site Nucleophile is the Cys92. Residues His201 and Glu203 contribute to the active site.

As to quaternary structure, part of the FGAM synthase complex composed of 1 PurL, 1 PurQ and 2 PurS subunits.

The protein resides in the cytoplasm. The enzyme catalyses N(2)-formyl-N(1)-(5-phospho-beta-D-ribosyl)glycinamide + L-glutamine + ATP + H2O = 2-formamido-N(1)-(5-O-phospho-beta-D-ribosyl)acetamidine + L-glutamate + ADP + phosphate + H(+). It catalyses the reaction L-glutamine + H2O = L-glutamate + NH4(+). Its pathway is purine metabolism; IMP biosynthesis via de novo pathway; 5-amino-1-(5-phospho-D-ribosyl)imidazole from N(2)-formyl-N(1)-(5-phospho-D-ribosyl)glycinamide: step 1/2. Functionally, part of the phosphoribosylformylglycinamidine synthase complex involved in the purines biosynthetic pathway. Catalyzes the ATP-dependent conversion of formylglycinamide ribonucleotide (FGAR) and glutamine to yield formylglycinamidine ribonucleotide (FGAM) and glutamate. The FGAM synthase complex is composed of three subunits. PurQ produces an ammonia molecule by converting glutamine to glutamate. PurL transfers the ammonia molecule to FGAR to form FGAM in an ATP-dependent manner. PurS interacts with PurQ and PurL and is thought to assist in the transfer of the ammonia molecule from PurQ to PurL. The sequence is that of Phosphoribosylformylglycinamidine synthase subunit PurQ from Frankia casuarinae (strain DSM 45818 / CECT 9043 / HFP020203 / CcI3).